We begin with the raw amino-acid sequence, 943 residues long: Serine/threonine-protein kinase ATG1 (943 aa).

The Protein kinase domain maps to 22–327; it reads FVIDKEIGKG…FEDFFHHPVI (306 aa). ATP contacts are provided by residues 28–36 and Lys51; that span reads IGKGSFAQV. Residue Asp165 is the Proton acceptor of the active site. Disordered stretches follow at residues 334-468, 503-561, 774-800, 858-888, and 914-943; these read LVED…LTDE, QQGQ…SPGA, LPEEHPSHPSNRPPETSALGGSSGGQA, HLPKRRVSTSSKEEQSVAAQDASDDMSSDDK, and AASKAQQQQQQQQVVVRRRSGDVTPRSVPT. Residues 338–352 show a composition bias toward basic and acidic residues; that stretch reads DIPKPEKPVLAETKS. Residues 517–529 show a composition bias toward polar residues; sequence ATQQGHPTSTTGA. A compositionally biased stretch (basic and acidic residues) spans 542-554; sequence RNDHYRKASHDKT. Low complexity predominate over residues 919–928; that stretch reads QQQQQQQQVV.

This sequence belongs to the protein kinase superfamily. Ser/Thr protein kinase family. APG1/unc-51/ULK1 subfamily. Homodimer. Forms a ternary complex with ATG13 and ATG17.

The protein resides in the cytoplasm. It localises to the preautophagosomal structure membrane. It catalyses the reaction L-seryl-[protein] + ATP = O-phospho-L-seryl-[protein] + ADP + H(+). The enzyme catalyses L-threonyl-[protein] + ATP = O-phospho-L-threonyl-[protein] + ADP + H(+). In terms of biological role, serine/threonine protein kinase involved in the cytoplasm to vacuole transport (Cvt) and found to be essential in autophagy, where it is required for the formation of autophagosomes. Involved in the clearance of protein aggregates which cannot be efficiently cleared by the proteasome. Required for selective autophagic degradation of the nucleus (nucleophagy) as well as for mitophagy which contributes to regulate mitochondrial quantity and quality by eliminating the mitochondria to a basal level to fulfill cellular energy requirements and preventing excess ROS production. Also involved in endoplasmic reticulum-specific autophagic process, in selective removal of ER-associated degradation (ERAD) substrates. Plays a key role in ATG9 and ATG23 cycling through the pre-autophagosomal structure and is necessary to promote ATG18 binding to ATG9 through phosphorylation of ATG9. Catalyzes phosphorylation of ATG4, decreasing the interaction between ATG4 and ATG8 and impairing deconjugation of PE-conjugated forms of ATG8. The chain is Serine/threonine-protein kinase ATG1 from Chaetomium globosum (strain ATCC 6205 / CBS 148.51 / DSM 1962 / NBRC 6347 / NRRL 1970) (Soil fungus).